The following is a 1038-amino-acid chain: Activated CDC42 kinase 1 (1038 aa).

An SAM-like domain region spans residues 1–110 (MQPEEGTGWL…TSPAPGGPAG (110 aa)). Positions 90–114 (PPHHSQSTFRKTSPAPGGPAGEGPL) are disordered. The Protein kinase domain occupies 126 to 385 (LRLLEKLGDG…PTFVALRDFL (260 aa)). ATP is bound by residues 132–140 (LGDGSFGVV) and K158. The active-site Proton acceptor is the D252. The residue at position 284 (Y284) is a Phosphotyrosine; by SRC and autocatalysis. Positions 388–448 (AQPTDMRALQ…PRNVVTSVAG (61 aa)) constitute an SH3 domain. The CRIB domain occupies 454-466 (ISQPLQNSFIHTG). Residues 497–535 (LSVELSTSRPPQHLGGVKKPTYDPVSEDQDPLSSDFKRL) are disordered. The residue at position 518 (Y518) is a Phosphotyrosine. The interval 623 to 652 (DWDARPLPPPPAYDDVAQDEDDFEICSINS) is required for interaction with SRC. Residues 632–635 (PPAY) form a required for interaction with NEDD4 region. 2 disordered regions span residues 659–702 (VPAG…SSAQ) and 718–840 (LQAP…GPRA). Phosphoserine is present on S724. The segment at 733-876 (GDDKPQVPPR…SYLERYQRFL (144 aa)) is EBD domain. Composition is skewed to pro residues over residues 738-749 (QVPPRVPIPPRP), 772-783 (PASPPRVPPREP), and 794-805 (PLVPPGSSPLPP). Y827 carries the post-translational modification Phosphotyrosine. Residue R839 is modified to Omega-N-methylarginine. Phosphotyrosine occurs at positions 859 and 872. S881 carries the post-translational modification Phosphoserine. The segment at 917 to 957 (LDPKANFSTNNSNPGARPPPPRATARLPQRGCPGDGPEAGR) is disordered. In terms of domain architecture, UBA spans 958-996 (PADKIQMAMVHGVTTEECQAALQCHGWSVQRAAQYLKVE).

The protein belongs to the protein kinase superfamily. Tyr protein kinase family. In terms of assembly, interacts with NEDD4 (via WW3 domain). NEDD4L and EGF promote association with NEDD4. Homodimer. Interacts with AR, CDC42, WWASL and WWOX. Interacts with CSPG4 (activated). Interacts with MERTK (activated); stimulates autophosphorylation. May interact (phosphorylated) with HSP90AB1; maintains kinase activity. Interacts with NPHP1. Interacts with SNX9 (via SH3 domain). Interacts with SRC (via SH2 and SH3 domain). Interacts with EGFR, and this interaction is dependent on EGF stimulation and kinase activity of EGFR. Interacts (via kinase domain) with AKT1. Part of a collagen stimulated complex involved in cell migration composed of CDC42, CRK, TNK2 and BCAR1/p130cas. Interacts with BCAR1/p130cas via SH3 domains. Forms complexes with GRB2 and numerous receptor tyrosine kinases (RTK) including LTK, AXL or PDGFRL, in which GRB2 promotes RTK recruitment by TNK2. Mg(2+) serves as cofactor. Autophosphorylation regulates kinase activity. Phosphorylation on Tyr-518 is required for interaction with SRC and is observed during association with clathrin-coated pits. Post-translationally, polyubiquitinated by NEDD4 and NEDD4L. Degradation can be induced by EGF and is lysosome-dependent. In terms of tissue distribution, the Tyr-284 phosphorylated form shows a significant increase in expression in breast cancers during the progressive stages i.e. normal to hyperplasia (ADH), ductal carcinoma in situ (DCIS), invasive ductal carcinoma (IDC) and lymph node metastatic (LNMM) stages. It also shows a significant increase in expression in prostate cancers during the progressive stages.

It is found in the cell membrane. The protein localises to the nucleus. It localises to the endosome. The protein resides in the cell junction. Its subcellular location is the adherens junction. It is found in the cytoplasmic vesicle membrane. The protein localises to the cytoplasmic vesicle. It localises to the clathrin-coated vesicle. The protein resides in the membrane. Its subcellular location is the clathrin-coated pit. It is found in the cytoplasm. The protein localises to the perinuclear region. It localises to the cytosol. It carries out the reaction L-tyrosyl-[protein] + ATP = O-phospho-L-tyrosyl-[protein] + ADP + H(+). The catalysed reaction is L-seryl-[protein] + ATP = O-phospho-L-seryl-[protein] + ADP + H(+). The enzyme catalyses L-threonyl-[protein] + ATP = O-phospho-L-threonyl-[protein] + ADP + H(+). Its activity is regulated as follows. Inhibited by AIM-100 (4-amino-5,6-biaryl-furo[2,3-d]pyrimidine), which suppresses activating phosphorylation at Tyr-284. Repressed by dasatinib. Its function is as follows. Non-receptor tyrosine-protein and serine/threonine-protein kinase that is implicated in cell spreading and migration, cell survival, cell growth and proliferation. Transduces extracellular signals to cytosolic and nuclear effectors. Phosphorylates AKT1, AR, MCF2, WASL and WWOX. Implicated in trafficking and clathrin-mediated endocytosis through binding to epidermal growth factor receptor (EGFR) and clathrin. Binds to both poly- and mono-ubiquitin and regulates ligand-induced degradation of EGFR, thereby contributing to the accumulation of EGFR at the limiting membrane of early endosomes. Downstream effector of CDC42 which mediates CDC42-dependent cell migration via phosphorylation of BCAR1. May be involved both in adult synaptic function and plasticity and in brain development. Activates AKT1 by phosphorylating it on 'Tyr-176'. Phosphorylates AR on 'Tyr-267' and 'Tyr-363' thereby promoting its recruitment to androgen-responsive enhancers (AREs). Phosphorylates WWOX on 'Tyr-287'. Phosphorylates MCF2, thereby enhancing its activity as a guanine nucleotide exchange factor (GEF) toward Rho family proteins. Contributes to the control of AXL receptor levels. Confers metastatic properties on cancer cells and promotes tumor growth by negatively regulating tumor suppressor such as WWOX and positively regulating pro-survival factors such as AKT1 and AR. Phosphorylates WASP. This chain is Activated CDC42 kinase 1 (TNK2), found in Homo sapiens (Human).